An 87-amino-acid chain; its full sequence is Polyketide-8 synthase acyl carrier protein 2 (87 aa).

Residues 8–83 (ALDKEQLREL…GTYELLTSKL (76 aa)) form the Carrier domain. Serine 43 carries the post-translational modification O-(pantetheine 4'-phosphoryl)serine.

In terms of processing, 4'-phosphopantetheine is transferred from CoA to a specific serine of the apo-ACP-like protein.

Its function is as follows. Acyl carrier protein. The polypeptide is Polyketide-8 synthase acyl carrier protein 2 (Streptomyces avermitilis (strain ATCC 31267 / DSM 46492 / JCM 5070 / NBRC 14893 / NCIMB 12804 / NRRL 8165 / MA-4680)).